A 157-amino-acid chain; its full sequence is Ribosomal RNA large subunit methyltransferase H (157 aa).

Residues Leu-74, Gly-106, and Leu-125–Leu-130 contribute to the S-adenosyl-L-methionine site.

Belongs to the RNA methyltransferase RlmH family. As to quaternary structure, homodimer.

The protein resides in the cytoplasm. The enzyme catalyses pseudouridine(1915) in 23S rRNA + S-adenosyl-L-methionine = N(3)-methylpseudouridine(1915) in 23S rRNA + S-adenosyl-L-homocysteine + H(+). Specifically methylates the pseudouridine at position 1915 (m3Psi1915) in 23S rRNA. The chain is Ribosomal RNA large subunit methyltransferase H from Desulfovibrio desulfuricans (strain ATCC 27774 / DSM 6949 / MB).